A 277-amino-acid polypeptide reads, in one-letter code: Undecaprenyl-diphosphatase (277 aa).

8 helical membrane passes run 11–31 (WWQA…PISS), 47–67 (AGAS…LIYF), 96–116 (VGIL…KAIW), 123–143 (LWVI…AEQT), 153–173 (LGIW…IPGV), 197–217 (SFLL…ISEF), 227–247 (LGTL…IQFL), and 254–274 (LFIV…ALGF).

This sequence belongs to the UppP family.

The protein resides in the cell inner membrane. The enzyme catalyses di-trans,octa-cis-undecaprenyl diphosphate + H2O = di-trans,octa-cis-undecaprenyl phosphate + phosphate + H(+). Catalyzes the dephosphorylation of undecaprenyl diphosphate (UPP). Confers resistance to bacitracin. The chain is Undecaprenyl-diphosphatase from Synechococcus sp. (strain JA-2-3B'a(2-13)) (Cyanobacteria bacterium Yellowstone B-Prime).